Here is a 192-residue protein sequence, read N- to C-terminus: MAQMYFYYSAMNAGKSTTLLQSSFNYQERGMTPVIFTAALDDRYGIGKVSSRIGLQAEAQLFKADTNLYQEIAALNEVEKRHCILVDECQFLSKEQVYQLTEVVDKLHIPVLCYGLRTDFLGELFEGSKYLLSWADKLVELKTICHCGRKANMVIRTDEHGNAIKEGDQVAIGGNDRYVSVCRQHYKEALGK.

ATP is bound by residues 9–16 and 87–90; these read SAMNAGKS and DECQ. Glu-88 serves as the catalytic Proton acceptor. Zn(2+) is bound by residues Cys-145, Cys-147, Cys-182, and His-185.

The protein belongs to the thymidine kinase family. Homotetramer.

The protein localises to the cytoplasm. The catalysed reaction is thymidine + ATP = dTMP + ADP + H(+). In Vibrio vulnificus (strain YJ016), this protein is Thymidine kinase.